The following is a 177-amino-acid chain: MRERPRLGEDSSLISLFLQVVAFLAMVMGTHTYSHWPSCCPSKGQDTSEELLRWSTVPVPPLEPARPNRHPESCRASEDGPLNSRAISPWRYELDRDLNRLPQDLYHARCLCPHCVSLQTGSHMDPRGNSELLYHNQTVFYRRPCHGEKGTHKGYCLERRLYRVSLACVCVRPRVMG.

A signal peptide spans 1–32 (MRERPRLGEDSSLISLFLQVVAFLAMVMGTHT). Positions 58–81 (PVPPLEPARPNRHPESCRASEDGP) are disordered. The segment covering 69 to 78 (RHPESCRASE) has biased composition (basic and acidic residues). 2 disulfides stabilise this stretch: C110-C168 and C115-C170. N136 carries N-linked (GlcNAc...) asparagine glycosylation.

The protein belongs to the IL-17 family. As to expression, expressed at low levels in several tissues, including brain, kidney, lung, prostate, testis, spinal cord, adrenal gland, and trachea.

It is found in the secreted. Its function is as follows. Cytokine produced by various cells such as eosinophils, T-helper type 2 (Th2) cells or epithelial cells that plays a role in internal safety of adaptive immune responses by regulating cytokine production. Promotes and augments T-helper type 2 responses locally or systemically. Exerts its activity via its receptor composed of IL17RA and IL17RB for signal transduction. In turn, stimulates the JAK2-STAT5A pathway and promotes the secretion of type-2 associated cytokines including IL4, IL9 and IL13. Also induces the release of IL8, and IL6 from eosinophils through the combined activation of MAPK and NF-kappa-B pathways. Inhibits the differentiation of T-helper (Th17) cells via the production of IL4, IL5 and IL13. This Homo sapiens (Human) protein is Interleukin-25 (IL25).